The chain runs to 529 residues: MMMTKQKPTLTERLNLGDEVRELKLGATFNPKNTSTAFHTIKYDFKPASVDTSRMATVDVGSNNQVTVTVPNLESSGVPHTVYKGNHKKYTKECLIIYDKETGVITLEKLNHNIQVKKTRSEMTNKPSLMPAANAGPLMSGANGGGPIPSSMMAAAGSGSGTAPKLENSTMRISSKTKVSTGSRRNNIIDFKPRNSPMQQSSPSRPVVSHRSPQSAPAWHANNAQQTLPSIPMITDDDDFGLNAALHNGGGHANISGSSTGSSSGQPDYVSSSHMGKQRQALPQGHAKRQQMTQQRSSPPMHHQQHQNQQQQQQNYGRVGGSSNYAQQQHQQQMQQQQQQHQQQQQRASFSHSNHSNSMPLDINSPSHHDHVTQSVAQAAAVLEQQIGGEPSASSSSSESDSSDTDSGSDSDDSTDDDRPTQQKQQNSATHQQQHHQMQQQHQQQQQHMHQLPNLGLGSISPAYNSHYQHQQQQQQPPQQHSHHHHQQQQQQQQQQQQSGIYASNGGFPNDLLQNDLQLSSNSSDDDDD.

Disordered regions lie at residues alanine 155 to threonine 235 and alanine 253 to aspartate 529. Positions glutamate 167–asparagine 186 are enriched in polar residues. 4 stretches are compositionally biased toward low complexity: residues arginine 194–serine 215, serine 256–glycine 265, histidine 306–asparagine 315, and glutamine 327–glutamine 346. A Phosphoserine modification is found at serine 196. Positions arginine 347–methionine 359 are enriched in polar residues. Residues aspartate 401 to aspartate 416 are compositionally biased toward acidic residues. 4 stretches are compositionally biased toward low complexity: residues histidine 431 to glutamine 451, glutamine 469 to glutamine 480, glutamine 488 to serine 499, and asparagine 510 to serine 523.

Belongs to the EAF family.

It is found in the nucleus. Functionally, promotes transcriptional elongation by Su(Tpl)/ELL. Essential for development. The chain is Ell-associated factor Eaf from Drosophila grimshawi (Hawaiian fruit fly).